Consider the following 900-residue polypeptide: DNA mismatch repair protein MutS (900 aa).

Position 637–644 (G637–S644) interacts with ATP.

The protein belongs to the DNA mismatch repair MutS family.

Its function is as follows. This protein is involved in the repair of mismatches in DNA. It is possible that it carries out the mismatch recognition step. This protein has a weak ATPase activity. The protein is DNA mismatch repair protein MutS of Methanosarcina barkeri (strain Fusaro / DSM 804).